Consider the following 285-residue polypeptide: Protoheme IX farnesyltransferase (285 aa).

A run of 7 helical transmembrane segments spans residues 16–36, 40–60, 106–126, 136–156, 165–185, 217–237, and 265–285; these read AKPK…ILAF, WYNL…SMII, LLAN…YVFV, WLNI…GYAA, SLLL…ALAL, ILMI…YVII, and YKFS…SFIL.

The protein belongs to the UbiA prenyltransferase family. Protoheme IX farnesyltransferase subfamily.

It localises to the cell membrane. The catalysed reaction is heme b + (2E,6E)-farnesyl diphosphate + H2O = Fe(II)-heme o + diphosphate. Its pathway is porphyrin-containing compound metabolism; heme O biosynthesis; heme O from protoheme: step 1/1. Converts heme B (protoheme IX) to heme O by substitution of the vinyl group on carbon 2 of heme B porphyrin ring with a hydroxyethyl farnesyl side group. The protein is Protoheme IX farnesyltransferase of Sulfolobus acidocaldarius (strain ATCC 33909 / DSM 639 / JCM 8929 / NBRC 15157 / NCIMB 11770).